We begin with the raw amino-acid sequence, 121 residues long: ATP synthase epsilon chain (121 aa).

The protein belongs to the ATPase epsilon chain family. In terms of assembly, F-type ATPases have 2 components, CF(1) - the catalytic core - and CF(0) - the membrane proton channel. CF(1) has five subunits: alpha(3), beta(3), gamma(1), delta(1), epsilon(1). CF(0) has three main subunits: a, b and c.

Its subcellular location is the cell membrane. Its function is as follows. Produces ATP from ADP in the presence of a proton gradient across the membrane. The sequence is that of ATP synthase epsilon chain from Mycolicibacterium smegmatis (strain ATCC 700084 / mc(2)155) (Mycobacterium smegmatis).